The chain runs to 218 residues: Non-structural protein NS3 (218 aa).

The protein belongs to the orbivirus NS3 family.

May play a role in the release of virions from infected cells. In Camelus dromedarius (Dromedary), this protein is Non-structural protein NS3 (Segment-10).